A 214-amino-acid chain; its full sequence is Adenylate kinase (214 aa).

Residue 10–15 (GAGKGT) participates in ATP binding. An NMP region spans residues 30–59 (STGDMLRAAIKAGTELGKQAKAVIDAGQLV). AMP contacts are provided by residues Thr-31, Arg-36, 57–59 (QLV), 85–88 (GFPR), and Gln-92. Positions 122–159 (GRRAHLPSGRTYHVVYNPPKVEGKDDVTGEDLVVRDDD) are LID. ATP-binding positions include Arg-123 and 132 to 133 (TY). AMP is bound by residues Arg-156 and Arg-167. Lys-200 provides a ligand contact to ATP.

This sequence belongs to the adenylate kinase family. As to quaternary structure, monomer.

It is found in the cytoplasm. The enzyme catalyses AMP + ATP = 2 ADP. It functions in the pathway purine metabolism; AMP biosynthesis via salvage pathway; AMP from ADP: step 1/1. In terms of biological role, catalyzes the reversible transfer of the terminal phosphate group between ATP and AMP. Plays an important role in cellular energy homeostasis and in adenine nucleotide metabolism. This is Adenylate kinase from Vibrio parahaemolyticus serotype O3:K6 (strain RIMD 2210633).